We begin with the raw amino-acid sequence, 216 residues long: uncharacterized protein (216 aa).

A helical membrane pass occupies residues 5–25 (YVKALVAVTVALGVLLPSTIS). 2 stretches are compositionally biased toward low complexity: residues 28 to 67 (KSFS…SSSS) and 89 to 108 (KASS…ATSK). The disordered stretch occupies residues 28-115 (KSFSGRSSSS…TSKVTGKTYS (88 aa)). Transmembrane regions (helical) follow at residues 137–157 (GFAP…MFMI) and 183–203 (IAWI…IALI).

It localises to the cell membrane. This is an uncharacterized protein from Bacillus subtilis (strain 168).